Consider the following 437-residue polypeptide: Major capsid protein (437 aa).

4 N-linked (Glc...) asparagine; by host glycosylation sites follow: N280, N302, N399, and N406.

The protein belongs to the NCLDV major capsid protein family. In terms of processing, myristoylated at the C-terminus. Glycosylated; highly branched oligosaccharides. The pattern of glycosylation sites are unusual.

The protein resides in the virion. Functionally, major capsid protein self-assembles to form an icosahedral capsid with a pseudo T=169 symmetry, about 190 nm in diameter, and consisting of 1680 major capsid proteins trimers. The capsid consists in 5040 copies of the major capsid protein (hexamers), 60 copies of the penton protein (pentamers) and 1800 minor capsid proteins of different types. The minor capsid proteins form a hexagonal network below the outer capsid shell, stabilizing the capsid by binding neighboring capsomers together. The polypeptide is Major capsid protein (Chlorella (PBCV-1)).